A 366-amino-acid polypeptide reads, in one-letter code: Hydroxyproline O-arabinosyltransferase 1 (366 aa).

The helical; Signal-anchor transmembrane segment at Thr-6–Ile-26 threads the bilayer.

As to expression, ubiquitous.

Its subcellular location is the golgi apparatus. It localises to the cis-Golgi network membrane. It carries out the reaction trans-4-hydroxy-L-prolyl-[protein] + UDP-beta-L-arabinofuranose = O-(beta-L-arabinofuranosyl)-trans-4-hydroxy-L-prolyl-[protein] + UDP + H(+). Glycosyltransferase involved in the O-arabinosylation of several proteins including extensins and small signaling peptides. Catalyzes the transfer of the initial L-arabinose to the hydroxyl group of Hyp residues. Contributes redundantly with HPAT2 and HPAT3 to arabinosylation of EXT3. The polypeptide is Hydroxyproline O-arabinosyltransferase 1 (Arabidopsis thaliana (Mouse-ear cress)).